Reading from the N-terminus, the 85-residue chain is Cysteine-rich venom protein 1 (85 aa).

Positions 1–21 are cleaved as a signal peptide; it reads MCRYALIVLVVVVVATNLSEA. 5 cysteine pairs are disulfide-bonded: cysteine 29–cysteine 63, cysteine 38–cysteine 59, cysteine 42–cysteine 53, cysteine 46–cysteine 84, and cysteine 65–cysteine 78. The TIL domain maps to 29 to 84; sequence CEPNRIYKTCGPACPPTCEDPDPDCNETPQCKAGCFCIPGLIENMKGGNCISPSLC.

The protein belongs to the serine protease inhibitor-like (TIL domain-containing) family. In terms of tissue distribution, expressed by the venom gland.

Its subcellular location is the secreted. Its function is as follows. May be a phenoloxidase inhibitor that stabilizes or inhibits venom phenoloxidase while it is stored in the venom sac. In Pimpla hypochondriaca (Parasitoid wasp), this protein is Cysteine-rich venom protein 1.